A 1102-amino-acid polypeptide reads, in one-letter code: WD repeat-containing protein 72 (1102 aa).

WD repeat units lie at residues alanine 15–alanine 54, glycine 60–lysine 102, asparagine 160–glutamine 197, lysine 318–phenylalanine 362, alanine 402–leucine 441, glycine 459–lysine 504, leucine 507–histidine 552, and lysine 555–histidine 594. Phosphoserine is present on residues serine 1081 and serine 1083.

The protein localises to the cytoplasmic vesicle. Plays a major role in formation of tooth enamel. Specifically required during the maturation phase of amelogenesis for normal formation of the enamel matrix and clearance of enamel proteins. May be involved in localization of the calcium transporter SLC24A4 to the ameloblast cell membrane. This is WD repeat-containing protein 72 (WDR72) from Homo sapiens (Human).